The primary structure comprises 256 residues: Type III pantothenate kinase 1 (256 aa).

D6 to F13 is a binding site for ATP. G107–R110 is a substrate binding site. D109 serves as the catalytic Proton acceptor. D130 lines the K(+) pocket. Residue T133 participates in ATP binding. T185 is a substrate binding site.

This sequence belongs to the type III pantothenate kinase family. As to quaternary structure, homodimer. The cofactor is NH4(+). K(+) is required as a cofactor.

The protein localises to the cytoplasm. It carries out the reaction (R)-pantothenate + ATP = (R)-4'-phosphopantothenate + ADP + H(+). It functions in the pathway cofactor biosynthesis; coenzyme A biosynthesis; CoA from (R)-pantothenate: step 1/5. Functionally, catalyzes the phosphorylation of pantothenate (Pan), the first step in CoA biosynthesis. This is Type III pantothenate kinase 1 from Francisella tularensis subsp. holarctica (strain LVS).